A 217-amino-acid chain; its full sequence is Small ribosomal subunit protein eS6 (217 aa).

It belongs to the eukaryotic ribosomal protein eS6 family. Phosphorylated.

This chain is Small ribosomal subunit protein eS6 (RPS6), found in Encephalitozoon cuniculi (strain GB-M1) (Microsporidian parasite).